The following is a 505-amino-acid chain: Lysine--tRNA ligase (505 aa).

Mg(2+) is bound by residues glutamate 415 and glutamate 422.

This sequence belongs to the class-II aminoacyl-tRNA synthetase family. Homodimer. It depends on Mg(2+) as a cofactor.

It is found in the cytoplasm. The catalysed reaction is tRNA(Lys) + L-lysine + ATP = L-lysyl-tRNA(Lys) + AMP + diphosphate. The chain is Lysine--tRNA ligase from Xanthomonas axonopodis pv. citri (strain 306).